The following is a 520-amino-acid chain: Putative tyrosine carboxypeptidase MATCAP2 (520 aa).

The segment at 116-153 is disordered; sequence EEKKYHSQKQSSSTYSKRCRKPSKSPNTSRSKDPRRMK. H331 provides a ligand contact to Zn(2+). E332 functions as the Nucleophile in the catalytic mechanism. Zn(2+) is bound by residues H336 and E367.

It depends on Zn(2+) as a cofactor.

Its function is as follows. Putative tyrosine carboxypeptidase. This chain is Putative tyrosine carboxypeptidase MATCAP2, found in Homo sapiens (Human).